The following is a 339-amino-acid chain: Ketol-acid reductoisomerase (NADP(+)) (339 aa).

Residues 1-182 (MRVYYDRDAD…GGGRAGIIET (182 aa)) form the KARI N-terminal Rossmann domain. Residues 24 to 27 (YGSQ), Arg48, Ser51, Ser53, and 83 to 86 (DELQ) contribute to the NADP(+) site. His108 is a catalytic residue. Gly134 serves as a coordination point for NADP(+). Residues 183 to 328 (TFKEECETDL…ERLRAMMPWI (146 aa)) enclose the KARI C-terminal knotted domain. 4 residues coordinate Mg(2+): Asp191, Glu195, Glu227, and Glu231. Ser252 is a binding site for substrate.

This sequence belongs to the ketol-acid reductoisomerase family. Mg(2+) is required as a cofactor.

It catalyses the reaction (2R)-2,3-dihydroxy-3-methylbutanoate + NADP(+) = (2S)-2-acetolactate + NADPH + H(+). The catalysed reaction is (2R,3R)-2,3-dihydroxy-3-methylpentanoate + NADP(+) = (S)-2-ethyl-2-hydroxy-3-oxobutanoate + NADPH + H(+). Its pathway is amino-acid biosynthesis; L-isoleucine biosynthesis; L-isoleucine from 2-oxobutanoate: step 2/4. It functions in the pathway amino-acid biosynthesis; L-valine biosynthesis; L-valine from pyruvate: step 2/4. In terms of biological role, involved in the biosynthesis of branched-chain amino acids (BCAA). Catalyzes an alkyl-migration followed by a ketol-acid reduction of (S)-2-acetolactate (S2AL) to yield (R)-2,3-dihydroxy-isovalerate. In the isomerase reaction, S2AL is rearranged via a Mg-dependent methyl migration to produce 3-hydroxy-3-methyl-2-ketobutyrate (HMKB). In the reductase reaction, this 2-ketoacid undergoes a metal-dependent reduction by NADPH to yield (R)-2,3-dihydroxy-isovalerate. The protein is Ketol-acid reductoisomerase (NADP(+)) of Methylobacterium nodulans (strain LMG 21967 / CNCM I-2342 / ORS 2060).